Consider the following 161-residue polypeptide: Allophycocyanin alpha chain (161 aa).

Asn71 bears the N4-methylasparagine mark. Residue Cys81 participates in (2R,3E)-phycocyanobilin binding.

Belongs to the phycobiliprotein family. As to quaternary structure, heterodimer of an alpha and a beta chain. Contains one covalently linked phycocyanobilin chromophore.

Its subcellular location is the plastid. The protein resides in the chloroplast thylakoid membrane. Functionally, light-harvesting photosynthetic bile pigment-protein from the phycobiliprotein complex. Allophycocyanin has a maximum absorption at approximately 650 nanometers. The protein is Allophycocyanin alpha chain (apcA) of Cyanidium caldarium (Red alga).